The primary structure comprises 205 residues: Protein N-terminal glutamine amidohydrolase (205 aa).

Residues cysteine 20, histidine 74, and aspartate 90 contribute to the active site.

Belongs to the NTAQ1 family. In terms of assembly, monomer.

The enzyme catalyses N-terminal L-glutaminyl-[protein] + H2O = N-terminal L-glutamyl-[protein] + NH4(+). Mediates the side-chain deamidation of N-terminal glutamine residues to glutamate, an important step in N-end rule pathway of protein degradation. Conversion of the resulting N-terminal glutamine to glutamate renders the protein susceptible to arginylation, polyubiquitination and degradation as specified by the N-end rule. Does not act on substrates with internal or C-terminal glutamine and does not act on non-glutamine residues in any position. This Drosophila ananassae (Fruit fly) protein is Protein N-terminal glutamine amidohydrolase (tun).